Reading from the N-terminus, the 352-residue chain is tRNA pseudouridine synthase D (352 aa).

The Nucleophile role is filled by Asp-81. Residues 157–303 enclose the TRUD domain; that stretch reads GVPNYFGTQR…MDHERRILRL (147 aa).

Belongs to the pseudouridine synthase TruD family.

The enzyme catalyses uridine(13) in tRNA = pseudouridine(13) in tRNA. In terms of biological role, responsible for synthesis of pseudouridine from uracil-13 in transfer RNAs. This is tRNA pseudouridine synthase D from Pseudomonas putida (strain ATCC 47054 / DSM 6125 / CFBP 8728 / NCIMB 11950 / KT2440).